A 304-amino-acid polypeptide reads, in one-letter code: UDP-3-O-acyl-N-acetylglucosamine deacetylase (304 aa).

3 residues coordinate Zn(2+): His-78, His-237, and Asp-241. Residue His-264 is the Proton donor of the active site.

The protein belongs to the LpxC family. The cofactor is Zn(2+).

The catalysed reaction is a UDP-3-O-[(3R)-3-hydroxyacyl]-N-acetyl-alpha-D-glucosamine + H2O = a UDP-3-O-[(3R)-3-hydroxyacyl]-alpha-D-glucosamine + acetate. It participates in glycolipid biosynthesis; lipid IV(A) biosynthesis; lipid IV(A) from (3R)-3-hydroxytetradecanoyl-[acyl-carrier-protein] and UDP-N-acetyl-alpha-D-glucosamine: step 2/6. In terms of biological role, catalyzes the hydrolysis of UDP-3-O-myristoyl-N-acetylglucosamine to form UDP-3-O-myristoylglucosamine and acetate, the committed step in lipid A biosynthesis. The polypeptide is UDP-3-O-acyl-N-acetylglucosamine deacetylase (Xylella fastidiosa (strain Temecula1 / ATCC 700964)).